The following is a 117-amino-acid chain: Hydrogenase maturation factor HypA (117 aa).

Residue histidine 2 participates in Ni(2+) binding. Zn(2+) contacts are provided by cysteine 73, cysteine 76, cysteine 89, and cysteine 92.

The protein belongs to the HypA/HybF family.

Involved in the maturation of [NiFe] hydrogenases. Required for nickel insertion into the metal center of the hydrogenase. The sequence is that of Hydrogenase maturation factor HypA from Shewanella baltica (strain OS185).